The following is a 106-amino-acid chain: U1-lycotoxin-Ls1b (106 aa).

The first 19 residues, 1 to 19 (MKVLVVVALLVTLISYSSS), serve as a signal peptide directing secretion. Residues 20-40 (EGIDDLEADELLSLMANEQTR) constitute a propeptide that is removed on maturation. 4 disulfides stabilise this stretch: C43-C58, C50-C67, C57-C85, and C69-C83.

Belongs to the neurotoxin 19 (CSTX) family. 04 (U1-Lctx) subfamily. In terms of tissue distribution, expressed by the venom gland.

It localises to the secreted. The polypeptide is U1-lycotoxin-Ls1b (Lycosa singoriensis (Wolf spider)).